Reading from the N-terminus, the 342-residue chain is Protease HtpX homolog (342 aa).

2 helical membrane passes run 6 to 26 (TAML…LIGG) and 28 to 48 (GGMM…YWNS). Residue H130 coordinates Zn(2+). E131 is a catalytic residue. Zn(2+) is bound at residue H134. Helical transmembrane passes span 145 to 165 (ITAT…FFGG) and 173 to 193 (GGGI…AMLV). E202 contributes to the Zn(2+) binding site. A disordered region spans residues 290–342 (PQHSKPAASGPWGSSAERSTDDPWGVKGGASTRSVPKIGRRGKDNDAPKGPWN).

The protein belongs to the peptidase M48B family. Zn(2+) serves as cofactor.

Its subcellular location is the cell inner membrane. This is Protease HtpX homolog from Allorhizobium ampelinum (strain ATCC BAA-846 / DSM 112012 / S4) (Agrobacterium vitis (strain S4)).